Here is a 578-residue protein sequence, read N- to C-terminus: Telomere repeat-binding protein 1 (578 aa).

Residues 293-372 (VKLRIKSFRV…HLDSLDFSLE (80 aa)) form the Ubiquitin-like domain. Residues 440–467 (ELSSQSQPPSRKSRRSEQQQQQAAQRRI) form a disordered region. Positions 463 to 522 (AQRRIRRPFSVAEVEALVQAVEKLGTGRWRDVKLCAFEDADHRTYVDLKDKWKTLVHTAK) constitute an HTH myb-type domain. 3 interaction with DNA regions span residues 465–469 (RRIRR), 511–515 (KDKWK), and 522–529 (KISPQQRR). Residues 491–518 (WRDVKLCAFEDADHRTYVDLKDKWKTLV) constitute a DNA-binding region (H-T-H motif).

Homodimer and heterodimer with TRP2 and TRP3. Interacts with KU70. In terms of tissue distribution, expressed ubiquitously. Highest expression in flowers and leaves.

It localises to the nucleus. Functionally, binds specifically to the plant telomeric double-stranded DNA sequences 5'-GGTTTAG-3'. At least 4 repeats of telomeric sequences are required for binding. Induces DNA bending. The chain is Telomere repeat-binding protein 1 (TRP1) from Arabidopsis thaliana (Mouse-ear cress).